The following is a 368-amino-acid chain: Agmatine deiminase (368 aa).

Catalysis depends on Cys-357, which acts as the Amidino-cysteine intermediate.

The protein belongs to the agmatine deiminase family. Homodimer.

The catalysed reaction is agmatine + H2O = N-carbamoylputrescine + NH4(+). It functions in the pathway amine and polyamine biosynthesis; putrescine biosynthesis via agmatine pathway; N-carbamoylputrescine from agmatine: step 1/1. In terms of biological role, mediates the hydrolysis of agmatine into N-carbamoylputrescine in the arginine decarboxylase (ADC) pathway of putrescine biosynthesis, a basic polyamine. This chain is Agmatine deiminase, found in Pseudomonas putida (strain ATCC 47054 / DSM 6125 / CFBP 8728 / NCIMB 11950 / KT2440).